Consider the following 248-residue polypeptide: Triosephosphate isomerase (248 aa).

Residues N10 and K12 each contribute to the substrate site. H95 (electrophile) is an active-site residue. E165 serves as the catalytic Proton acceptor.

The protein belongs to the triosephosphate isomerase family. Homodimer.

The enzyme catalyses D-glyceraldehyde 3-phosphate = dihydroxyacetone phosphate. It functions in the pathway carbohydrate biosynthesis; gluconeogenesis. The protein operates within carbohydrate degradation; glycolysis; D-glyceraldehyde 3-phosphate from glycerone phosphate: step 1/1. The protein is Triosephosphate isomerase (tpi-1) of Neurospora crassa (strain ATCC 24698 / 74-OR23-1A / CBS 708.71 / DSM 1257 / FGSC 987).